Reading from the N-terminus, the 86-residue chain is Large ribosomal subunit protein bL31B (86 aa).

This sequence belongs to the bacterial ribosomal protein bL31 family. Type B subfamily. As to quaternary structure, part of the 50S ribosomal subunit.

This chain is Large ribosomal subunit protein bL31B, found in Erwinia tasmaniensis (strain DSM 17950 / CFBP 7177 / CIP 109463 / NCPPB 4357 / Et1/99).